The following is a 361-amino-acid chain: MHFSTITAALALLGLGAATPTDYSTSSYSKNQGLAQAWTSKGRQYIGTALTIRDDPVEQGIIQSRTDFNSITPENAMKWESTEPQRNNFTFAGADAVADFADRYNKEMRCHTLVWHSQLPAWVSQGNFDNKTLISIMENHIKKVAGRYKNKCTHWDVVNEALNEDGTYRSSVFYNTIGEAFIPIAFRFAEKYAGSKTKLYYNDYNLEYGSAKALGAQRILKLVQSYGVQIDGVGLQAHLSSEATASTGGGVTPDVQTLTNVLKLYTDLGVEVAYTELDVRFTTPATDAKLKAQADAYARVVQSCINVKRCVGITVWGVSDKYSWIPGVFPTEGAALLWDENFNKKPAYSSVLKTIQSFRKS.

A signal peptide spans Met1–Ser26. The GH10 domain maps to Ile46–Thr354. Residues Asn88 and Asn130 are each glycosylated (N-linked (GlcNAc...) asparagine). The active-site Proton donor is the Glu160. The active-site Nucleophile is Glu276. A disulfide bond links Cys304 and Cys310.

This sequence belongs to the glycosyl hydrolase 10 (cellulase F) family.

It localises to the secreted. The catalysed reaction is Endohydrolysis of (1-&gt;4)-beta-D-xylosidic linkages in xylans.. It functions in the pathway glycan degradation; xylan degradation. Endo-1,4-beta-xylanase involved in the hydrolysis of xylan, a major structural heterogeneous polysaccharide found in plant biomass representing the second most abundant polysaccharide in the biosphere, after cellulose. Hydrolyzes birch-wood xylan, with a similar activity toward oat-spelt xylan. Also shows weak activities toward pNP-beta-D-cellobioside and pNP-beta-D-xylopyranoside, but no detectable activity toward carboxymethyl cellulose and pNP-beta-L-arabinofuranoside.-. This chain is Endo-1,4-beta-xylanase 2 (xynII), found in Aureobasidium pullulans (Black yeast).